A 338-amino-acid chain; its full sequence is F420-dependent glucose-6-phosphate dehydrogenase (338 aa).

A coenzyme F420-(gamma-Glu)n-binding site is contributed by Asp-40. His-41 functions as the Proton donor in the catalytic mechanism. Residues Thr-77 and 108–109 each bind coenzyme F420-(gamma-Glu)n; that span reads TG. Glu-110 functions as the Proton acceptor in the catalytic mechanism. Coenzyme F420-(gamma-Glu)n is bound by residues Asn-113, 178–179, and 181–182; these read GG and VV. Substrate is bound by residues Thr-196, Lys-199, Lys-260, and Arg-284.

The protein belongs to the F420-dependent glucose-6-phosphate dehydrogenase family. In terms of assembly, homodimer.

It catalyses the reaction oxidized coenzyme F420-(gamma-L-Glu)(n) + D-glucose 6-phosphate + H(+) = 6-phospho-D-glucono-1,5-lactone + reduced coenzyme F420-(gamma-L-Glu)(n). Functionally, catalyzes the coenzyme F420-dependent oxidation of glucose 6-phosphate (G6P) to 6-phosphogluconolactone. In Gordonia bronchialis (strain ATCC 25592 / DSM 43247 / BCRC 13721 / JCM 3198 / KCTC 3076 / NBRC 16047 / NCTC 10667) (Rhodococcus bronchialis), this protein is F420-dependent glucose-6-phosphate dehydrogenase.